We begin with the raw amino-acid sequence, 466 residues long: ATP synthase subunit beta (466 aa).

153–160 (GGAGVGKT) is an ATP binding site.

The protein belongs to the ATPase alpha/beta chains family. In terms of assembly, F-type ATPases have 2 components, CF(1) - the catalytic core - and CF(0) - the membrane proton channel. CF(1) has five subunits: alpha(3), beta(3), gamma(1), delta(1), epsilon(1). CF(0) has three main subunits: a(1), b(2) and c(9-12). The alpha and beta chains form an alternating ring which encloses part of the gamma chain. CF(1) is attached to CF(0) by a central stalk formed by the gamma and epsilon chains, while a peripheral stalk is formed by the delta and b chains.

It is found in the cell membrane. It carries out the reaction ATP + H2O + 4 H(+)(in) = ADP + phosphate + 5 H(+)(out). Functionally, produces ATP from ADP in the presence of a proton gradient across the membrane. The catalytic sites are hosted primarily by the beta subunits. The polypeptide is ATP synthase subunit beta (Leuconostoc mesenteroides subsp. mesenteroides (strain ATCC 8293 / DSM 20343 / BCRC 11652 / CCM 1803 / JCM 6124 / NCDO 523 / NBRC 100496 / NCIMB 8023 / NCTC 12954 / NRRL B-1118 / 37Y)).